We begin with the raw amino-acid sequence, 141 residues long: MRHGKAGRKLNRTASHRKAMFANMAASLIEHEQIVTTLPKAKEIRPIVEKLVTLGKRGDLHARRQAVSQIRDVAVVAKLFDAIASRYATRNGGYLRIMKAGFRQGDNAPLAVIEFVDRDADAKGSKDRARVAAEAEAAEAA.

Belongs to the bacterial ribosomal protein bL17 family. Part of the 50S ribosomal subunit. Contacts protein L32.

The sequence is that of Large ribosomal subunit protein bL17 from Sinorhizobium medicae (strain WSM419) (Ensifer medicae).